The primary structure comprises 181 residues: Shikimate kinase (181 aa).

23–28 (GTGKST) provides a ligand contact to ATP. Residue serine 27 participates in Mg(2+) binding. Residues aspartate 45, arginine 69, and glycine 91 each contribute to the substrate site. Arginine 129 is an ATP binding site. A substrate-binding site is contributed by arginine 148.

Belongs to the shikimate kinase family. As to quaternary structure, monomer. It depends on Mg(2+) as a cofactor.

The protein resides in the cytoplasm. It catalyses the reaction shikimate + ATP = 3-phosphoshikimate + ADP + H(+). It participates in metabolic intermediate biosynthesis; chorismate biosynthesis; chorismate from D-erythrose 4-phosphate and phosphoenolpyruvate: step 5/7. Catalyzes the specific phosphorylation of the 3-hydroxyl group of shikimic acid using ATP as a cosubstrate. The sequence is that of Shikimate kinase from Geobacter sulfurreducens (strain ATCC 51573 / DSM 12127 / PCA).